A 517-amino-acid polypeptide reads, in one-letter code: Beta-glucosidase 1 (517 aa).

Positions 1-22 are cleaved as a signal peptide; it reads MEDVLTLITMIVLLLLAFHGFG. A beta-D-glucoside contacts are provided by residues glutamine 48, histidine 145, and 190-191; that span reads NE. Glutamate 191 serves as the catalytic Proton donor. Cysteine 210 and cysteine 217 are joined by a disulfide. Residues asparagine 216 and asparagine 221 are each glycosylated (N-linked (GlcNAc...) asparagine). Positions 333 and 406 each coordinate a beta-D-glucoside. Glutamate 406 serves as the catalytic Nucleophile. The N-linked (GlcNAc...) asparagine glycan is linked to asparagine 441. The a beta-D-glucoside site is built by tryptophan 451 and phenylalanine 467. Asparagine 473 and asparagine 512 each carry an N-linked (GlcNAc...) asparagine glycan.

Belongs to the glycosyl hydrolase 1 family.

The catalysed reaction is Hydrolysis of terminal, non-reducing beta-D-glucosyl residues with release of beta-D-glucose.. This is Beta-glucosidase 1 from Arabidopsis thaliana (Mouse-ear cress).